The primary structure comprises 289 residues: UPF0725 protein At1g27860 (289 aa).

The segment at 266-289 (DQQRSMTLPSGEQAESSKKRPRLS) is disordered. Residues 268–279 (QRSMTLPSGEQA) are compositionally biased toward polar residues.

The protein belongs to the UPF0725 (EMB2204) family.

The sequence is that of UPF0725 protein At1g27860 from Arabidopsis thaliana (Mouse-ear cress).